We begin with the raw amino-acid sequence, 156 residues long: MPRKGSVPKREVLPDPIYGSKVISKLINGIMLDGKKGVAQKIVYDALALINERTGEDALEVFEKAMNNIMPVLEVKARRVGGANYQVPVEVRSDRRQTLGIRWLVNYTRARGEKGMVEKLAKEIIDASNSTGATVKKKEDTHKMAEANKAFAHYRW.

This sequence belongs to the universal ribosomal protein uS7 family. In terms of assembly, part of the 30S ribosomal subunit. Contacts proteins S9 and S11.

In terms of biological role, one of the primary rRNA binding proteins, it binds directly to 16S rRNA where it nucleates assembly of the head domain of the 30S subunit. Is located at the subunit interface close to the decoding center, probably blocks exit of the E-site tRNA. The chain is Small ribosomal subunit protein uS7 from Alkaliphilus oremlandii (strain OhILAs) (Clostridium oremlandii (strain OhILAs)).